Here is a 61-residue protein sequence, read N- to C-terminus: Toxin S5C1 (61 aa).

4 disulfide bridges follow: Cys3-Cys22, Cys16-Cys39, Cys41-Cys53, and Cys54-Cys59. Positions 45-47 match the Cell attachment site motif; that stretch reads RGD.

It belongs to the three-finger toxin family. Short-chain subfamily. Antiplatelet toxin sub-subfamily. In terms of tissue distribution, expressed by the venom gland.

The protein resides in the secreted. Inhibits ADP-induced platelet aggregation and inhibits the binding of purified platelet fibrinogen receptor alpha-IIb/beta-3 (ITGA2B/ITGB3) to immobilized fibrinogen. The protein is Toxin S5C1 of Dendroaspis jamesoni kaimosae (Eastern Jameson's mamba).